A 1040-amino-acid chain; its full sequence is ATPase family AAA domain-containing protein 2 (1040 aa).

The span at 1 to 11 (MSLLKMRRHAI) shows a compositional bias: basic residues. Residues 1-30 (MSLLKMRRHAIHSSDSTSSSSSEDDCFERR) are disordered. S65 carries the phosphoserine modification. 122 to 129 (GPPGTGKT) contacts ATP. Phosphoserine occurs at positions 401 and 406. 2 coiled-coil regions span residues 619-643 (LTAE…IFLR) and 735-761 (YAII…KKRG). Positions 629–741 (EQEEDTFREL…DTAYAIIKEE (113 aa)) constitute a Bromo domain. Residues 772 to 799 (YHVMPKQNSPPVGDKKPDQEQNEKLKVP) form a disordered region. Residues K777 and K797 each participate in a glycyl lysine isopeptide (Lys-Gly) (interchain with G-Cter in SUMO2) cross-link. Over residues 784-797 (GDKKPDQEQNEKLK) the composition is skewed to basic and acidic residues. Residues T801 and T825 each carry the phosphothreonine modification. Residues 811 to 833 (LKRKFHKKSKWHVGTKIKRRKIS) show a composition bias toward basic residues. A disordered region spans residues 811–935 (LKRKFHKKSK…SQVTDIPEDS (125 aa)). Polar residues predominate over residues 835–848 (AKDNSLNAMNSSSR). Residues S849, S883, and S891 each carry the phosphoserine modification. 2 stretches are compositionally biased toward basic and acidic residues: residues 849–863 (SDTE…EHTE) and 874–885 (ESDKQNRLESNI). The span at 901–919 (EEPKETTEGTELRKDRIVC) shows a compositional bias: basic and acidic residues. S951 bears the Phosphoserine mark. Phosphothreonine is present on T972.

The protein belongs to the AAA ATPase family. Interacts with ESR1 and NCOA3 and these interactions are enhanced by estradiol. Interacts with acetylated lysine residues on histone H1.4, H2A, H2B and H3 (in vitro).

It localises to the nucleus. It carries out the reaction ATP + H2O = ADP + phosphate + H(+). Functionally, may be a transcriptional coactivator of the nuclear receptor ESR1 required to induce the expression of a subset of estradiol target genes, such as CCND1, MYC and E2F1. May play a role in the recruitment or occupancy of CREBBP at some ESR1 target gene promoters. May be required for histone hyperacetylation. In Mus musculus (Mouse), this protein is ATPase family AAA domain-containing protein 2 (Atad2).